Consider the following 1201-residue polypeptide: DNA-directed RNA polymerase subunit beta' (1201 aa).

4 residues coordinate Zn(2+): cysteine 60, cysteine 62, cysteine 75, and cysteine 78. Residues aspartate 449, aspartate 451, and aspartate 453 each coordinate Mg(2+). Zn(2+) contacts are provided by cysteine 818, cysteine 892, cysteine 899, and cysteine 902.

The protein belongs to the RNA polymerase beta' chain family. In terms of assembly, the RNAP catalytic core consists of 2 alpha, 1 beta, 1 beta' and 1 omega subunit. When a sigma factor is associated with the core the holoenzyme is formed, which can initiate transcription. Mg(2+) serves as cofactor. Requires Zn(2+) as cofactor.

The catalysed reaction is RNA(n) + a ribonucleoside 5'-triphosphate = RNA(n+1) + diphosphate. DNA-dependent RNA polymerase catalyzes the transcription of DNA into RNA using the four ribonucleoside triphosphates as substrates. In Listeria monocytogenes serotype 4b (strain F2365), this protein is DNA-directed RNA polymerase subunit beta'.